Consider the following 92-residue polypeptide: DNA-directed RNA polymerase subunit omega (92 aa).

Belongs to the RNA polymerase subunit omega family. As to quaternary structure, the RNAP catalytic core consists of 2 alpha, 1 beta, 1 beta' and 1 omega subunit. When a sigma factor is associated with the core the holoenzyme is formed, which can initiate transcription.

It carries out the reaction RNA(n) + a ribonucleoside 5'-triphosphate = RNA(n+1) + diphosphate. Its function is as follows. Promotes RNA polymerase assembly. Latches the N- and C-terminal regions of the beta' subunit thereby facilitating its interaction with the beta and alpha subunits. The polypeptide is DNA-directed RNA polymerase subunit omega (Corynebacterium diphtheriae (strain ATCC 700971 / NCTC 13129 / Biotype gravis)).